A 288-amino-acid chain; its full sequence is Fibroblast growth factor 2 (288 aa).

The tract at residues 1 to 133 (MVGVGGGDVE…RGSRPGPAGT (133 aa)) is disordered. The propeptide at 1 to 142 (MVGVGGGDVE…TMAAGSITTL (142 aa)) is or 93, or 124, or 125, or 131, or 161. Over residues 52-64 (SVNPRSRAAGSPR) the composition is skewed to low complexity. The span at 68–84 (RRTEERPSGSRLGDRGR) shows a compositional bias: basic and acidic residues. Residues Arg-108, Arg-110, and Arg-112 each carry the omega-N-methylarginine; alternate modification. Arg-108, Arg-110, and Arg-112 each carry symmetric dimethylarginine; alternate. A compositionally biased stretch (low complexity) spans 113–132 (GTAAPRAAPAARGSRPGPAG). Asn-169 provides a ligand contact to heparin. Positions 179–181 (DGR) match the Cell attachment site; atypical motif. Position 215 is a phosphotyrosine; by TEC (Tyr-215). Residues 221–223 (DGR) carry the Cell attachment site; atypical motif. Lys-228 participates in a covalent cross-link: Glycyl lysine isopeptide (Lys-Gly) (interchain with G-Cter in SUMO1). Residues 261–277 (KRTGQYKLGSKTGPGQK) form a heparin-binding region.

The protein belongs to the heparin-binding growth factors family. In terms of assembly, monomer. Homodimer. Interacts with FGFR1, FGFR2, FGFR3 and FGFR4. Affinity between fibroblast growth factors (FGFs) and their receptors is increased by heparan sulfate glycosaminoglycans that function as coreceptors. Interacts with CSPG4, FGFBP1 and TEC. Found in a complex with FGFBP1, FGF1 and FGF2. Interacts with FGFBP3. Interacts with integrin ITGAV:ITGB3; the interaction is required for FGF2 signaling. Interacts with SNORC (via the extracellular domain). Interacts with glypican GPC3. Phosphorylation at Tyr-215 regulates FGF2 unconventional secretion. Post-translationally, several N-termini starting at positions 94, 125, 126, 132, 143 and 162 have been identified by direct sequencing. As to expression, expressed in granulosa and cumulus cells. Expressed in hepatocellular carcinoma cells, but not in non-cancerous liver tissue.

It localises to the secreted. It is found in the nucleus. Functionally, acts as a ligand for FGFR1, FGFR2, FGFR3 and FGFR4. Also acts as an integrin ligand which is required for FGF2 signaling. Binds to integrin ITGAV:ITGB3. Plays an important role in the regulation of cell survival, cell division, cell differentiation and cell migration. Functions as a potent mitogen in vitro. Can induce angiogenesis. Mediates phosphorylation of ERK1/2 and thereby promotes retinal lens fiber differentiation. This Homo sapiens (Human) protein is Fibroblast growth factor 2 (FGF2).